A 511-amino-acid chain; its full sequence is Cytochrome P450 26B1 (511 aa).

C440 provides a ligand contact to heme.

The protein belongs to the cytochrome P450 family. Requires heme as cofactor.

It localises to the endoplasmic reticulum membrane. It is found in the microsome membrane. It catalyses the reaction all-trans-retinoate + reduced [NADPH--hemoprotein reductase] + O2 = all-trans-4-hydroxyretinoate + oxidized [NADPH--hemoprotein reductase] + H2O + H(+). The catalysed reaction is all-trans-retinoate + reduced [NADPH--hemoprotein reductase] + O2 = all-trans-18-hydroxyretinoate + oxidized [NADPH--hemoprotein reductase] + H2O + H(+). Its function is as follows. A cytochrome P450 monooxygenase involved in the metabolism of retinoates (RAs), the active metabolites of vitamin A, and critical signaling molecules in animals. RAs exist as at least four different isomers: all-trans-RA (atRA), 9-cis-RA, 13-cis-RA, and 9,13-dicis-RA, where atRA is considered to be the biologically active isomer, although 9-cis-RA and 13-cis-RA also have activity. Catalyzes the hydroxylation of atRA primarily at C-4 and C-18, thereby contributing to the regulation of atRA homeostasis and signaling. Hydroxylation of atRA limits its biological activity and initiates a degradative process leading to its eventual elimination. Involved in the convertion of atRA to all-trans-4-oxo-RA. Can oxidize all-trans-13,14-dihydroretinoate (DRA) to metabolites which could include all-trans-4-oxo-DRA, all-trans-4-hydroxy-DRA, all-trans-5,8-epoxy-DRA, and all-trans-18-hydroxy-DRA. Plays a role in skeletal development, both at the level of patterning and in the ossification of bone and the establishment of some synovial joints. The sequence is that of Cytochrome P450 26B1 from Danio rerio (Zebrafish).